The following is a 117-amino-acid chain: DNA-directed RNA polymerase II subunit RPB11 (117 aa).

This sequence belongs to the archaeal Rpo11/eukaryotic RPB11/RPC19 RNA polymerase subunit family. Component of the RNA polymerase II (Pol II) complex consisting of 12 subunits.

The protein localises to the nucleus. Functionally, DNA-dependent RNA polymerase catalyzes the transcription of DNA into RNA using the four ribonucleoside triphosphates as substrates. Component of RNA polymerase II which synthesizes mRNA precursors and many functional non-coding RNAs. Pol II is the central component of the basal RNA polymerase II transcription machinery. It is composed of mobile elements that move relative to each other. RPB11 is part of the core element with the central large cleft. In Drosophila melanogaster (Fruit fly), this protein is DNA-directed RNA polymerase II subunit RPB11.